We begin with the raw amino-acid sequence, 77 residues long: Sec-independent protein translocase protein TatA (77 aa).

A helical transmembrane segment spans residues 1 to 21 (MGSLSIWHWIVVIAVVLLLFG). A compositionally biased stretch (basic and acidic residues) spans 43–60 (MQDDDKAPEKTEPVKSID). Residues 43-77 (MQDDDKAPEKTEPVKSIDHGATPSATRTDVGSKAV) form a disordered region.

The protein belongs to the TatA/E family. In terms of assembly, the Tat system comprises two distinct complexes: a TatABC complex, containing multiple copies of TatA, TatB and TatC subunits, and a separate TatA complex, containing only TatA subunits. Substrates initially bind to the TatABC complex, which probably triggers association of the separate TatA complex to form the active translocon.

It localises to the cell inner membrane. Functionally, part of the twin-arginine translocation (Tat) system that transports large folded proteins containing a characteristic twin-arginine motif in their signal peptide across membranes. TatA could form the protein-conducting channel of the Tat system. This is Sec-independent protein translocase protein TatA from Bradyrhizobium sp. (strain BTAi1 / ATCC BAA-1182).